The sequence spans 97 residues: Small ribosomal subunit protein bS20 (97 aa).

Belongs to the bacterial ribosomal protein bS20 family.

Its function is as follows. Binds directly to 16S ribosomal RNA. In Prochlorococcus marinus (strain AS9601), this protein is Small ribosomal subunit protein bS20.